Consider the following 202-residue polypeptide: Endothelin-1 (202 aa).

An N-terminal signal peptide occupies residues 1-23 (MDYFSMMVSLLLVAFHGAPETAA). The disordered stretch occupies residues 24 to 49 (SGTELSTGAENPGEKPPASAPWRPRR). Positions 24 to 50 (SGTELSTGAENPGEKPPASAPWRPRRS) are excised as a propeptide. Cystine bridges form between cysteine 53/cysteine 67 and cysteine 55/cysteine 63. Residues 74 to 202 (VNTPGHIVPY…EQKVTHNRTH (129 aa)) constitute a propeptide that is removed on maturation. The interval 110-124 (CQCTSPHDKKCWNFC) is endothelin-like.

Belongs to the endothelin/sarafotoxin family.

It is found in the secreted. In terms of biological role, endothelins are endothelium-derived vasoconstrictor peptides. Probable ligand for G-protein coupled receptors EDNRA and EDNRB which activates PTK2B, BCAR1, BCAR3 and, GTPases RAP1 and RHOA cascade in glomerular mesangial cells. Also binds the DEAR/FBXW7-AS1 receptor. Promotes mesenteric arterial wall remodeling via activation of ROCK signaling and subsequent colocalization of NFATC3 with F-actin filaments. NFATC3 then translocates to the nucleus where it subsequently promotes the transcription of the smooth muscle hypertrophy and differentiation marker ACTA2. This is Endothelin-1 (EDN1) from Oryctolagus cuniculus (Rabbit).